The chain runs to 691 residues: Hormonally up-regulated neu tumor-associated kinase homolog A (691 aa).

One can recognise a Protein kinase domain in the interval 55–313 (YLIGRKLGEG…IQQALANRWL (259 aa)). Residues 61–69 (LGEGSFAKV) and Lys84 each bind ATP. Asp179 serves as the catalytic Proton acceptor. A compositionally biased stretch (basic and acidic residues) spans 406–425 (MNKNSYEERRSKDLEKRGEP). Disordered regions lie at residues 406-475 (MNKN…GGLS), 499-518 (QSPD…HSQE), 580-640 (FQFD…SRGR), and 655-679 (QVVS…SPGY). Positions 440–453 (SHRQNACLTPQGHS) are enriched in polar residues. The segment covering 457-470 (PVKERRSSKSERES) has biased composition (basic and acidic residues). Residues 582–597 (FDNTSPSKSHFNQASF) show a composition bias toward polar residues. A compositionally biased stretch (low complexity) spans 604–620 (SPSSPESMSPTSPHSPS). Over residues 621-631 (CNNNISGNLGS) the composition is skewed to polar residues.

It belongs to the protein kinase superfamily. CAMK Ser/Thr protein kinase family. SNF1 subfamily.

It carries out the reaction L-seryl-[protein] + ATP = O-phospho-L-seryl-[protein] + ADP + H(+). It catalyses the reaction L-threonyl-[protein] + ATP = O-phospho-L-threonyl-[protein] + ADP + H(+). The chain is Hormonally up-regulated neu tumor-associated kinase homolog A (hunk-a) from Xenopus laevis (African clawed frog).